Here is a 92-residue protein sequence, read N- to C-terminus: Small ribosomal subunit protein uS19 (92 aa).

The protein belongs to the universal ribosomal protein uS19 family.

In terms of biological role, protein S19 forms a complex with S13 that binds strongly to the 16S ribosomal RNA. This Picosynechococcus sp. (strain ATCC 27264 / PCC 7002 / PR-6) (Agmenellum quadruplicatum) protein is Small ribosomal subunit protein uS19.